A 250-amino-acid chain; its full sequence is 5-oxoprolinase subunit A (250 aa).

This sequence belongs to the LamB/PxpA family. Forms a complex composed of PxpA, PxpB and PxpC.

It carries out the reaction 5-oxo-L-proline + ATP + 2 H2O = L-glutamate + ADP + phosphate + H(+). Catalyzes the cleavage of 5-oxoproline to form L-glutamate coupled to the hydrolysis of ATP to ADP and inorganic phosphate. The chain is 5-oxoprolinase subunit A from Staphylococcus haemolyticus (strain JCSC1435).